The primary structure comprises 492 residues: Ketol-acid reductoisomerase (NADP(+)) (492 aa).

Residues 17–208 form the KARI N-terminal Rossmann domain; it reads LGVCEFMDRS…GGDRAGVLKS (192 aa). NADP(+) is bound by residues 45–48, Arg-68, Arg-76, Ser-78, and 108–110; these read CGAQ and DKQ. The active site involves His-132. Residue Gly-158 participates in NADP(+) binding. KARI C-terminal knotted domains are found at residues 209–353 and 354–487; these read SFVA…AEQE and YYDN…MTEM. Mg(2+) is bound by residues Asp-217, Glu-221, Glu-389, and Glu-393. A substrate-binding site is contributed by Ser-414.

It belongs to the ketol-acid reductoisomerase family. Requires Mg(2+) as cofactor.

It catalyses the reaction (2R)-2,3-dihydroxy-3-methylbutanoate + NADP(+) = (2S)-2-acetolactate + NADPH + H(+). The catalysed reaction is (2R,3R)-2,3-dihydroxy-3-methylpentanoate + NADP(+) = (S)-2-ethyl-2-hydroxy-3-oxobutanoate + NADPH + H(+). Its pathway is amino-acid biosynthesis; L-isoleucine biosynthesis; L-isoleucine from 2-oxobutanoate: step 2/4. The protein operates within amino-acid biosynthesis; L-valine biosynthesis; L-valine from pyruvate: step 2/4. Functionally, involved in the biosynthesis of branched-chain amino acids (BCAA). Catalyzes an alkyl-migration followed by a ketol-acid reduction of (S)-2-acetolactate (S2AL) to yield (R)-2,3-dihydroxy-isovalerate. In the isomerase reaction, S2AL is rearranged via a Mg-dependent methyl migration to produce 3-hydroxy-3-methyl-2-ketobutyrate (HMKB). In the reductase reaction, this 2-ketoacid undergoes a metal-dependent reduction by NADPH to yield (R)-2,3-dihydroxy-isovalerate. This Cytophaga hutchinsonii (strain ATCC 33406 / DSM 1761 / CIP 103989 / NBRC 15051 / NCIMB 9469 / D465) protein is Ketol-acid reductoisomerase (NADP(+)).